The following is a 112-amino-acid chain: T cell receptor alpha variable 34 (112 aa).

Positions 1–21 (METVLQVLLGILGFQAAWVSS) are cleaved as a signal peptide. Positions 22–112 (QELEQSPQSL…HAGIYLCGAD (91 aa)) constitute an Ig-like domain. Asn38 and Asn42 each carry an N-linked (GlcNAc...) asparagine glycan. A disulfide bridge connects residues Cys43 and Cys109.

In terms of assembly, alpha-beta TR is a heterodimer composed of an alpha and beta chain; disulfide-linked. The alpha-beta TR is associated with the transmembrane signaling CD3 coreceptor proteins to form the TR-CD3 (TcR or TCR). The assembly of alpha-beta TR heterodimers with CD3 occurs in the endoplasmic reticulum where a single alpha-beta TR heterodimer associates with one CD3D-CD3E heterodimer, one CD3G-CD3E heterodimer and one CD247 homodimer forming a stable octameric structure. CD3D-CD3E and CD3G-CD3E heterodimers preferentially associate with TR alpha and TR beta chains, respectively. The association of the CD247 homodimer is the last step of TcR assembly in the endoplasmic reticulum and is required for transport to the cell surface.

Its subcellular location is the cell membrane. In terms of biological role, v region of the variable domain of T cell receptor (TR) alpha chain that participates in the antigen recognition. Alpha-beta T cell receptors are antigen specific receptors which are essential to the immune response and are present on the cell surface of T lymphocytes. Recognize peptide-major histocompatibility (MH) (pMH) complexes that are displayed by antigen presenting cells (APC), a prerequisite for efficient T cell adaptive immunity against pathogens. Binding of alpha-beta TR to pMH complex initiates TR-CD3 clustering on the cell surface and intracellular activation of LCK that phosphorylates the ITAM motifs of CD3G, CD3D, CD3E and CD247 enabling the recruitment of ZAP70. In turn ZAP70 phosphorylates LAT, which recruits numerous signaling molecules to form the LAT signalosome. The LAT signalosome propagates signal branching to three major signaling pathways, the calcium, the mitogen-activated protein kinase (MAPK) kinase and the nuclear factor NF-kappa-B (NF-kB) pathways, leading to the mobilization of transcription factors that are critical for gene expression and essential for T cell growth and differentiation. The T cell repertoire is generated in the thymus, by V-(D)-J rearrangement. This repertoire is then shaped by intrathymic selection events to generate a peripheral T cell pool of self-MH restricted, non-autoaggressive T cells. Post-thymic interaction of alpha-beta TR with the pMH complexes shapes TR structural and functional avidity. In Homo sapiens (Human), this protein is T cell receptor alpha variable 34.